Consider the following 207-residue polypeptide: Suppressor of IKBKE 1 (207 aa).

Coiled coils occupy residues 70–102 (HILL…DALE) and 164–192 (CKVQ…ESLQ).

The protein belongs to the SIKE family. Interacts with IKBKE and TBK1 via its coiled coil region. Interaction with TBK1 is disrupted upon viral infection or TLR3 stimulation. Interacts with CDC42BPB. Interacts with SIKE1 which mediates association with the STRIPAK core complex composed of PP2A catalytic and scaffolding subunits, the striatins (PP2A regulatory subunits), the striatin-associated proteins MOB4, STRIP1 and STRIP2, PDCD10 and members of the STE20 kinases, such as STK24 and STK26.

The protein resides in the cytoplasm. Functionally, physiological suppressor of IKK-epsilon and TBK1 that plays an inhibitory role in virus- and TLR3-triggered IRF3. Inhibits TLR3-mediated activation of interferon-stimulated response elements (ISRE) and the IFN-beta promoter. May act by disrupting the interactions of IKBKE or TBK1 with TICAM1/TRIF, IRF3 and RIGI. Does not inhibit NF-kappa-B activation pathways. Associates with the striatin-interacting phosphatase and kinase (STRIPAK) core complex, forming the extended (SIKE1:SLMAP)STRIPAK complex. The (SIKE1:SLMAP)STRIPAK complex dephosphorylates STK3 leading to the inhibition of Hippo signaling and the control of cell growth. In Mus musculus (Mouse), this protein is Suppressor of IKBKE 1 (Sike1).